Here is a 678-residue protein sequence, read N- to C-terminus: DNA ligase (678 aa).

Residues 32–36, 81–82, and glutamate 113 contribute to the NAD(+) site; these read DSEYD and SL. The active-site N6-AMP-lysine intermediate is lysine 115. Positions 136, 174, 291, and 315 each coordinate NAD(+). Positions 409, 412, 427, and 433 each coordinate Zn(2+). Residues 596-678 enclose the BRCT domain; that stretch reads ASDNPFAGKT…MRLLGESSDA (83 aa).

It belongs to the NAD-dependent DNA ligase family. LigA subfamily. Requires Mg(2+) as cofactor. The cofactor is Mn(2+).

The enzyme catalyses NAD(+) + (deoxyribonucleotide)n-3'-hydroxyl + 5'-phospho-(deoxyribonucleotide)m = (deoxyribonucleotide)n+m + AMP + beta-nicotinamide D-nucleotide.. Its function is as follows. DNA ligase that catalyzes the formation of phosphodiester linkages between 5'-phosphoryl and 3'-hydroxyl groups in double-stranded DNA using NAD as a coenzyme and as the energy source for the reaction. It is essential for DNA replication and repair of damaged DNA. This chain is DNA ligase, found in Sodalis glossinidius (strain morsitans).